We begin with the raw amino-acid sequence, 135 residues long: Large ribosomal subunit protein uL16c (135 aa).

This sequence belongs to the universal ribosomal protein uL16 family. In terms of assembly, part of the 50S ribosomal subunit.

The protein localises to the plastid. It localises to the chloroplast. This chain is Large ribosomal subunit protein uL16c, found in Panax ginseng (Korean ginseng).